We begin with the raw amino-acid sequence, 253 residues long: Ditrans,polycis-undecaprenyl-diphosphate synthase ((2E,6E)-farnesyl-diphosphate specific) (253 aa).

The active site involves aspartate 25. Aspartate 25 serves as a coordination point for Mg(2+). Substrate contacts are provided by residues 26-29 (GNGR), tryptophan 30, arginine 38, histidine 42, and 70-72 (SSE). Catalysis depends on asparagine 73, which acts as the Proton acceptor. Positions 74, 76, and 193 each coordinate substrate. Histidine 198 is a binding site for Mg(2+). A substrate-binding site is contributed by 199–201 (RIS). Glutamate 212 contacts Mg(2+).

The protein belongs to the UPP synthase family. In terms of assembly, homodimer. Mg(2+) serves as cofactor.

It carries out the reaction 8 isopentenyl diphosphate + (2E,6E)-farnesyl diphosphate = di-trans,octa-cis-undecaprenyl diphosphate + 8 diphosphate. Functionally, catalyzes the sequential condensation of isopentenyl diphosphate (IPP) with (2E,6E)-farnesyl diphosphate (E,E-FPP) to yield (2Z,6Z,10Z,14Z,18Z,22Z,26Z,30Z,34E,38E)-undecaprenyl diphosphate (di-trans,octa-cis-UPP). UPP is the precursor of glycosyl carrier lipid in the biosynthesis of bacterial cell wall polysaccharide components such as peptidoglycan and lipopolysaccharide. This is Ditrans,polycis-undecaprenyl-diphosphate synthase ((2E,6E)-farnesyl-diphosphate specific) from Pectobacterium atrosepticum (strain SCRI 1043 / ATCC BAA-672) (Erwinia carotovora subsp. atroseptica).